A 226-amino-acid chain; its full sequence is PKHD-type hydroxylase PST_0995 (226 aa).

One can recognise a Fe2OG dioxygenase domain in the interval 78 to 178 (KVFPPLFNCY…RLASFFWIQS (101 aa)). Fe cation is bound by residues histidine 96, aspartate 98, and histidine 159. Arginine 169 is a 2-oxoglutarate binding site.

The cofactor is Fe(2+). L-ascorbate serves as cofactor.

The protein is PKHD-type hydroxylase PST_0995 of Stutzerimonas stutzeri (strain A1501) (Pseudomonas stutzeri).